We begin with the raw amino-acid sequence, 275 residues long: DNA polymerase II subunit B4 (275 aa).

A DNA-binding region spans residues 11 to 17; that stretch reads LPLAIVR. The span at 112–122 shows a compositional bias: low complexity; that stretch reads ASYPAGGAALK. Residues 112-275 form a disordered region; sequence ASYPAGGAAL…EEVESDEEDE (164 aa). A Nuclear localization signal motif is present at residues 135-142; it reads KKRKQEEP. The segment covering 151-161 has biased composition (basic and acidic residues); the sequence is SKIDEETKRND. A coiled-coil region spans residues 152–179; that stretch reads KIDEETKRNDEETENDNTEEENGNDEED. Composition is skewed to acidic residues over residues 162 to 237 and 266 to 275; these read EETE…EESG and EEVESDEEDE.

It belongs to the NFYB/HAP3 subunit family. In terms of assembly, heterotrimeric transcription factor composed of three components, NF-YA, NF-YB and NF-YC. NF-YB and NF-YC must interact and dimerize for NF-YA association and DNA binding. Binds directly with DPB3-1.

It is found in the nucleus. Functionally, component of the NF-Y/HAP transcription factor complex. The NF-Y complex stimulates the transcription of various genes by recognizing and binding to a CCAAT motif in promoters. In Arabidopsis thaliana (Mouse-ear cress), this protein is DNA polymerase II subunit B4.